A 548-amino-acid chain; its full sequence is Acetamidase (548 aa).

Residues Lys-129 and Ser-204 each act as charge relay system in the active site. The Acyl-ester intermediate role is filled by Ser-228.

This sequence belongs to the amidase family.

It catalyses the reaction a monocarboxylic acid amide + H2O = a monocarboxylate + NH4(+). It carries out the reaction acetamide + H2O = acetate + NH4(+). Its function is as follows. Allows acetamide to be used as a sole carbon or nitrogen source. This Emericella nidulans (strain FGSC A4 / ATCC 38163 / CBS 112.46 / NRRL 194 / M139) (Aspergillus nidulans) protein is Acetamidase (amdS).